Here is a 306-residue protein sequence, read N- to C-terminus: Oxygen-dependent coproporphyrinogen-III oxidase (306 aa).

S94 is a binding site for substrate. 2 residues coordinate a divalent metal cation: H98 and H108. H108 functions as the Proton donor in the catalytic mechanism. 110-112 is a substrate binding site; it reads NVR. A divalent metal cation contacts are provided by H147 and H177. The important for dimerization stretch occupies residues 242–277; the sequence is YVEFNLVYDRGTLFGLQTGGRTESILMSMPPLVRWQ. Substrate is bound at residue 260–262; it reads GGR.

Belongs to the aerobic coproporphyrinogen-III oxidase family. Homodimer. It depends on a divalent metal cation as a cofactor.

It localises to the cytoplasm. The enzyme catalyses coproporphyrinogen III + O2 + 2 H(+) = protoporphyrinogen IX + 2 CO2 + 2 H2O. Its pathway is porphyrin-containing compound metabolism; protoporphyrin-IX biosynthesis; protoporphyrinogen-IX from coproporphyrinogen-III (O2 route): step 1/1. Involved in the heme biosynthesis. Catalyzes the aerobic oxidative decarboxylation of propionate groups of rings A and B of coproporphyrinogen-III to yield the vinyl groups in protoporphyrinogen-IX. This chain is Oxygen-dependent coproporphyrinogen-III oxidase, found in Shewanella sediminis (strain HAW-EB3).